The primary structure comprises 1437 residues: FYVE and coiled-coil domain-containing protein 1 (1437 aa).

Residue Ala2 is modified to N-acetylalanine. The stretch at 4–30 (SSTETQLQRIIRDLQDAATELSHEFKE) forms a coiled coil. The RUN domain maps to 36–169 (TDDSTSLHKF…VQFDLAPRGY (134 aa)). Position 196 is a phosphoserine (Ser196). Coiled coils occupy residues 223–270 (SLNN…VSRQ), 305–846 (SQAT…SEGA), and 873–1110 (ALTA…KDAL). Thr372 carries the phosphothreonine modification. A Phosphoserine modification is found at Ser837. Residues 1132–1190 (DMEVNHCHDCKREFSWIVRRHHCRICGRIFCYYCCNNYVVTKPSGKKERCCRACFQKFG) form an FYVE-type zinc finger. Zn(2+)-binding residues include Cys1138, Cys1141, Cys1154, Cys1157, Cys1162, Cys1165, Cys1182, and Cys1185. Disordered regions lie at residues 1191-1227 (EGSGSNDSSGSGTSQGEPSPMVSPAEASPQSIGSQGI) and 1253-1289 (SGSSLPETPTETDSMDPNTAEQDTTSNSLTPEDTEDV). A compositionally biased stretch (low complexity) spans 1194 to 1206 (GSNDSSGSGTSQG). 2 stretches are compositionally biased toward polar residues: residues 1218–1227 (SPQSIGSQGI) and 1253–1283 (SGSSLPETPTETDSMDPNTAEQDTTSNSLTP). Positions 1296–1425 (EICLLKSGEL…SKKVLYHLTV (130 aa)) constitute a GOLD domain.

As to quaternary structure, can form homodimers. Interacts (via C-terminus) with MAP1LC3B. Interacts with RAB7A; the interaction with RAB7A induces FYCO1 recruitment to late endosomal/lysosomal compartments. In terms of tissue distribution, expressed in heart and testis. Expressed in the eye lens.

It is found in the cytoplasmic vesicle. The protein localises to the autophagosome. The protein resides in the endosome. Its subcellular location is the lysosome. In terms of biological role, may mediate microtubule plus end-directed vesicle transport. This is FYVE and coiled-coil domain-containing protein 1 (Fyco1) from Mus musculus (Mouse).